We begin with the raw amino-acid sequence, 95 residues long: Class I hydrophobin 13 (95 aa).

4 cysteine pairs are disulfide-bonded: Cys14–Cys74, Cys21–Cys68, Cys22–Cys55, and Cys75–Cys88. Asn23 and Asn77 each carry an N-linked (GlcNAc...) asparagine glycan.

This sequence belongs to the fungal hydrophobin family. As to quaternary structure, self-assembles to form functional amyloid fibrils called rodlets. Self-assembly into fibrillar rodlets occurs spontaneously at hydrophobic:hydrophilic interfaces and the rodlets further associate laterally to form amphipathic monolayers.

It localises to the secreted. The protein localises to the cell wall. Functionally, aerial growth, conidiation, and dispersal of filamentous fungi in the environment rely upon a capability of their secreting small amphipathic proteins called hydrophobins (HPBs) with low sequence identity. Class I can self-assemble into an outermost layer of rodlet bundles on aerial cell surfaces, conferring cellular hydrophobicity that supports fungal growth, development and dispersal; whereas Class II form highly ordered films at water-air interfaces through intermolecular interactions but contribute nothing to the rodlet structure. The polypeptide is Class I hydrophobin 13 (Pleurotus ostreatus (strain PC15) (Oyster mushroom)).